Consider the following 225-residue polypeptide: RNA-binding protein 24-A (225 aa).

One can recognise an RRM domain in the interval 11–88 (TKIFVGGLPY…RKANVNLAYL (78 aa)).

Its subcellular location is the nucleus. It localises to the cytoplasm. Multifunctional RNA-binding protein involved in the regulation of pre-mRNA splicing, mRNA stability and mRNA translation important for cell fate decision and differentiation. Plays a major role in pre-mRNA alternative splicing regulation. Mediates preferentially muscle-specific exon inclusion in numerous mRNAs important for striated cardiac and skeletal muscle cell differentiation. Binds to intronic splicing enhancer (ISE) composed of stretches of GU-rich motifs localized in flanking intron of exon that will be included by alternative splicing. Involved in embryonic stem cell (ESC) transition to cardiac cell differentiation by promoting pre-mRNA alternative splicing events of several pluripotency and/or differentiation genes. Plays a role in the regulation of mRNA stability and mRNA translation to which it is bound. Involved in myogenic differentiation by regulating myog levels. Binds to a huge amount of mRNAs. Required for embryonic heart development, sarcomer and M-band formation in striated muscles. This is RNA-binding protein 24-A (rbm24-a) from Xenopus laevis (African clawed frog).